Reading from the N-terminus, the 239-residue chain is Norbelladine 4'-O-methyltransferase (239 aa).

Residues Val-55, Glu-77, 79 to 80, Ser-85, Asp-103, and Ala-132 contribute to the S-adenosyl-L-methionine site; that span reads GV. An a divalent metal cation-binding site is contributed by Asp-155. Asp-157 contributes to the S-adenosyl-L-methionine binding site. The a divalent metal cation site is built by Asp-181 and Asn-182.

The protein belongs to the class I-like SAM-binding methyltransferase superfamily. Cation-dependent O-methyltransferase family. Requires Mg(2+) as cofactor. As to expression, highly expressed in bulbs. Detected in leaves and inflorescences.

The catalysed reaction is norbelladine + S-adenosyl-L-methionine = 4'-O-methylnorbelladine + S-adenosyl-L-homocysteine + H(+). It participates in alkaloid biosynthesis. Its function is as follows. 4'-O-methyltransferase converting norbelladine to 4'-O-methylnorbelladine. 4'-O-methylnorbelladine is a precursor to all Amaryllidaceae alkaloids such as galanthamine, lycorine and haemanthamine, and including haemanthamine- and crinamine-type alkaloids, promising anticancer agents. Can use norbelladine, N-methylnorbelladine and dopamine as substrate, but not caffeic acid, vanillin, 3,4-dihydroxybenzaldehyde and tyramine. This is Norbelladine 4'-O-methyltransferase from Narcissus aff. pseudonarcissus MK-2014 (Daffodil).